Here is a 483-residue protein sequence, read N- to C-terminus: Aspartyl/glutamyl-tRNA(Asn/Gln) amidotransferase subunit B (483 aa).

It belongs to the GatB/GatE family. GatB subfamily. In terms of assembly, heterotrimer of A, B and C subunits.

The catalysed reaction is L-glutamyl-tRNA(Gln) + L-glutamine + ATP + H2O = L-glutaminyl-tRNA(Gln) + L-glutamate + ADP + phosphate + H(+). It carries out the reaction L-aspartyl-tRNA(Asn) + L-glutamine + ATP + H2O = L-asparaginyl-tRNA(Asn) + L-glutamate + ADP + phosphate + 2 H(+). Its function is as follows. Allows the formation of correctly charged Asn-tRNA(Asn) or Gln-tRNA(Gln) through the transamidation of misacylated Asp-tRNA(Asn) or Glu-tRNA(Gln) in organisms which lack either or both of asparaginyl-tRNA or glutaminyl-tRNA synthetases. The reaction takes place in the presence of glutamine and ATP through an activated phospho-Asp-tRNA(Asn) or phospho-Glu-tRNA(Gln). This Rickettsia rickettsii (strain Iowa) protein is Aspartyl/glutamyl-tRNA(Asn/Gln) amidotransferase subunit B.